A 429-amino-acid chain; its full sequence is Phosphoribosylamine--glycine ligase (429 aa).

Residues 109–316 (KDFLARHQIP…LVELCLAAID (208 aa)) enclose the ATP-grasp domain. 135–196 (VREQGAPIVV…EEFLDGEEAS (62 aa)) contacts ATP. The disordered stretch occupies residues 212–234 (SQDHKRVGDKDTGPNTGGMGAYS). Basic and acidic residues predominate over residues 213–223 (QDHKRVGDKDT). Mg(2+) contacts are provided by Glu286 and Asn288.

The protein belongs to the GARS family. Mg(2+) is required as a cofactor. Requires Mn(2+) as cofactor.

The enzyme catalyses 5-phospho-beta-D-ribosylamine + glycine + ATP = N(1)-(5-phospho-beta-D-ribosyl)glycinamide + ADP + phosphate + H(+). It functions in the pathway purine metabolism; IMP biosynthesis via de novo pathway; N(1)-(5-phospho-D-ribosyl)glycinamide from 5-phospho-alpha-D-ribose 1-diphosphate: step 2/2. This chain is Phosphoribosylamine--glycine ligase, found in Vibrio vulnificus (strain CMCP6).